Here is a 451-residue protein sequence, read N- to C-terminus: Adenylyltransferase and sulfurtransferase MOCS3-2 (451 aa).

Residues 42 to 62 (GEDSDEAEESSNDMPTPQTKL) are disordered. Over residues 43–52 (EDSDEAEESS) the composition is skewed to acidic residues. Phosphothreonine is present on Thr60. ATP-binding positions include Gly99, Asp120, 127–131 (SNLHR), Lys144, and 188–189 (DN). Zn(2+) contacts are provided by Cys229 and Cys232. Cys246 acts as the Glycyl thioester intermediate; for adenylyltransferase activity in catalysis. Zn(2+) is bound by residues Cys304 and Cys307. The region spanning 353-449 (QSQPHLLLDV…WTGSVDATFP (97 aa)) is the Rhodanese domain. The active-site Cysteine persulfide intermediate; for sulfurtransferase activity is the Cys408.

It in the N-terminal section; belongs to the HesA/MoeB/ThiF family. UBA4 subfamily. It depends on Zn(2+) as a cofactor.

Its subcellular location is the cytoplasm. The enzyme catalyses [molybdopterin-synthase sulfur-carrier protein]-C-terminal Gly-Gly + ATP + H(+) = [molybdopterin-synthase sulfur-carrier protein]-C-terminal Gly-Gly-AMP + diphosphate. The catalysed reaction is [molybdopterin-synthase sulfur-carrier protein]-C-terminal Gly-Gly-AMP + S-sulfanyl-L-cysteinyl-[cysteine desulfurase] + AH2 = [molybdopterin-synthase sulfur-carrier protein]-C-terminal-Gly-aminoethanethioate + L-cysteinyl-[cysteine desulfurase] + A + AMP + 2 H(+). The protein operates within tRNA modification; 5-methoxycarbonylmethyl-2-thiouridine-tRNA biosynthesis. It participates in cofactor biosynthesis; molybdopterin biosynthesis. Functionally, plays a central role in 2-thiolation of mcm(5)S(2)U at tRNA wobble positions of cytosolic tRNA(Lys), tRNA(Glu) and tRNA(Gln). Also essential during biosynthesis of the molybdenum cofactor. Acts by mediating the C-terminal thiocarboxylation of sulfur carriers URM1 and MOCS2A. Its N-terminus first activates URM1 and MOCS2A as acyl-adenylates (-COAMP), then the persulfide sulfur on the catalytic cysteine is transferred to URM1 and MOCS2A to form thiocarboxylation (-COSH) of their C-terminus. The reaction probably involves hydrogen sulfide that is generated from the persulfide intermediate and that acts as a nucleophile towards URM1 and MOCS2A. Subsequently, a transient disulfide bond is formed. Does not use thiosulfate as sulfur donor; NFS1 probably acting as a sulfur donor for thiocarboxylation reactions. The chain is Adenylyltransferase and sulfurtransferase MOCS3-2 from Drosophila pseudoobscura pseudoobscura (Fruit fly).